The sequence spans 492 residues: Probable cytochrome P450 310a1 (492 aa).

Position 428 (Cys-428) interacts with heme.

This sequence belongs to the cytochrome P450 family. Requires heme as cofactor.

The protein localises to the endoplasmic reticulum membrane. It is found in the microsome membrane. In terms of biological role, may be involved in the metabolism of insect hormones and in the breakdown of synthetic insecticides. The protein is Probable cytochrome P450 310a1 (Cyp310a1) of Drosophila melanogaster (Fruit fly).